The chain runs to 255 residues: Small ribosomal subunit protein eS1 (255 aa).

Ala-2 bears the N-acetylalanine; partial mark.

The protein belongs to the eukaryotic ribosomal protein eS1 family. As to quaternary structure, component of the small ribosomal subunit. Mature ribosomes consist of a small (40S) and a large (60S) subunit. The 40S subunit contains about 33 different proteins and 1 molecule of RNA (18S). The 60S subunit contains about 49 different proteins and 3 molecules of RNA (25S, 5.8S and 5S).

It is found in the cytoplasm. This chain is Small ribosomal subunit protein eS1, found in Arthroderma otae (strain ATCC MYA-4605 / CBS 113480) (Microsporum canis).